A 206-amino-acid chain; its full sequence is Large ribosomal subunit protein uL4 (206 aa).

It belongs to the universal ribosomal protein uL4 family. In terms of assembly, part of the 50S ribosomal subunit.

In terms of biological role, one of the primary rRNA binding proteins, this protein initially binds near the 5'-end of the 23S rRNA. It is important during the early stages of 50S assembly. It makes multiple contacts with different domains of the 23S rRNA in the assembled 50S subunit and ribosome. Forms part of the polypeptide exit tunnel. The polypeptide is Large ribosomal subunit protein uL4 (Rhodopseudomonas palustris (strain BisB18)).